A 227-amino-acid chain; its full sequence is Probable FKBP-type 25 kDa peptidyl-prolyl cis-trans isomerase (227 aa).

The 84-residue stretch at 144–227 (ATQVHVRYRG…VFEIDLLGFR (84 aa)) folds into the PPIase FKBP-type domain.

This sequence belongs to the FKBP-type PPIase family.

The enzyme catalyses [protein]-peptidylproline (omega=180) = [protein]-peptidylproline (omega=0). Functionally, PPIases accelerate the folding of proteins. The polypeptide is Probable FKBP-type 25 kDa peptidyl-prolyl cis-trans isomerase (fkl) (Pseudomonas aeruginosa (strain ATCC 15692 / DSM 22644 / CIP 104116 / JCM 14847 / LMG 12228 / 1C / PRS 101 / PAO1)).